The primary structure comprises 252 residues: Small ribosomal subunit protein uS2 (252 aa).

This sequence belongs to the universal ribosomal protein uS2 family.

This chain is Small ribosomal subunit protein uS2, found in Alcanivorax borkumensis (strain ATCC 700651 / DSM 11573 / NCIMB 13689 / SK2).